A 232-amino-acid chain; its full sequence is Chaperone protein CssC (232 aa).

Positions 1–20 (MKSKLIILLMLVPFSSFSTE) are cleaved as a signal peptide.

It belongs to the periplasmic pilus chaperone family.

The protein localises to the periplasm. Involved in the biogenesis of the CS6 fimbria. The sequence is that of Chaperone protein CssC (cssC) from Escherichia coli.